The sequence spans 189 residues: uncharacterized protein (189 aa).

A signal peptide spans methionine 1–alanine 19. The disordered stretch occupies residues proline 24–tyrosine 189. Positions serine 25 to glycine 69 are enriched in low complexity. The segment covering serine 70–alanine 101 has biased composition (gly residues). Over residues valine 102–glycine 142 the composition is skewed to low complexity. Polar residues predominate over residues phenylalanine 144–asparagine 157. Residues serine 165–serine 183 show a composition bias toward gly residues.

This is an uncharacterized protein from Dictyostelium discoideum (Social amoeba).